The following is a 189-amino-acid chain: GTP cyclohydrolase 1 (189 aa).

Residues cysteine 79, histidine 82, and cysteine 150 each coordinate Zn(2+).

Belongs to the GTP cyclohydrolase I family. As to quaternary structure, homomer.

It catalyses the reaction GTP + H2O = 7,8-dihydroneopterin 3'-triphosphate + formate + H(+). Its pathway is cofactor biosynthesis; 7,8-dihydroneopterin triphosphate biosynthesis; 7,8-dihydroneopterin triphosphate from GTP: step 1/1. This Rickettsia rickettsii (strain Iowa) protein is GTP cyclohydrolase 1.